Reading from the N-terminus, the 73-residue chain is U-scoloptoxin(15)-Sm2a (73 aa).

The signal sequence occupies residues Met1 to Ala20. Disulfide bonds link Cys39-Cys66 and Cys43-Cys68.

This sequence belongs to the scoloptoxin-15 family. Expressed by the venom gland.

It localises to the secreted. Its function is as follows. Activity unknown, even that a lot of targets (Kv, Nav, Cav) have been tested and activities on insects and mice have been tested. The polypeptide is U-scoloptoxin(15)-Sm2a (Scolopendra morsitans (Tanzanian blue ringleg centipede)).